We begin with the raw amino-acid sequence, 395 residues long: Gastric triacylglycerol lipase (395 aa).

An N-terminal signal peptide occupies residues 1 to 18 (MWLLLITSVISTFGGAHG). N-linked (GlcNAc...) asparagine glycosylation is found at asparagine 33, asparagine 68, and asparagine 98. The 300-residue stretch at 77 to 376 (PVVYLQHGLI…LAYNHLDFIW (300 aa)) folds into the AB hydrolase-1 domain. Serine 171 acts as the Nucleophile in catalysis. Cysteine 245 and cysteine 254 are oxidised to a cystine. The N-linked (GlcNAc...) asparagine glycan is linked to asparagine 270. Active-site charge relay system residues include aspartate 342 and histidine 371.

This sequence belongs to the AB hydrolase superfamily. Lipase family. Secreted by the serous (von Ebner's) glands at the back of the rat tongue.

It is found in the secreted. It carries out the reaction a triacylglycerol + H2O = a diacylglycerol + a fatty acid + H(+). It catalyses the reaction 1,2,3-tri-(9Z-octadecenoyl)-glycerol + H2O = 1,2-di-(9Z-octadecenoyl)-sn-glycerol + (9Z)-octadecenoate + H(+). The catalysed reaction is 1,2,3-trioctanoylglycerol + H2O = 1,2-dioctanoyl-sn-glycerol + octanoate + H(+). Catalyzes the hydrolysis of triacylglycerols to yield free fatty acids, diacylglycerol, monoacylglycerol, and glycerol. Shows a preferential hydrolysis at the sn-3 position of triacylglycerol. The sequence is that of Gastric triacylglycerol lipase (Lipf) from Rattus norvegicus (Rat).